Consider the following 407-residue polypeptide: Subtilisin-like protease CPC735_013710 (407 aa).

A signal peptide spans 1–17 (MQLLNLSLFFLLPFATA). A propeptide spanning residues 18 to 115 (NPIPQDSQNI…VLPDQKIYLA (98 aa)) is cleaved from the precursor. The 84-residue stretch at 31-114 (QYIVTLKDGL…SVLPDQKIYL (84 aa)) folds into the Inhibitor I9 domain. Positions 124–407 (GWNLGYMSSK…VAYNGIQEML (284 aa)) constitute a Peptidase S8 domain. The N-linked (GlcNAc...) asparagine glycan is linked to asparagine 145. Residues aspartate 162 and histidine 194 each act as charge relay system in the active site. N-linked (GlcNAc...) asparagine glycosylation is found at asparagine 241, asparagine 254, and asparagine 341. The active-site Charge relay system is the serine 350. N-linked (GlcNAc...) asparagine glycosylation is present at asparagine 381.

This sequence belongs to the peptidase S8 family.

It is found in the secreted. In terms of biological role, secreted subtilisin-like serine protease with keratinolytic activity that contributes to pathogenicity. The sequence is that of Subtilisin-like protease CPC735_013710 from Coccidioides posadasii (strain C735) (Valley fever fungus).